We begin with the raw amino-acid sequence, 130 residues long: RutC family protein in leuC 5'region (130 aa).

It belongs to the RutC family.

The polypeptide is RutC family protein in leuC 5'region (Leuconostoc mesenteroides subsp. cremoris).